Consider the following 197-residue polypeptide: Peptide deformylase (197 aa).

Cys106 and His148 together coordinate Fe cation. Glu149 is an active-site residue. His152 is a Fe cation binding site.

This sequence belongs to the polypeptide deformylase family. Requires Fe(2+) as cofactor.

The enzyme catalyses N-terminal N-formyl-L-methionyl-[peptide] + H2O = N-terminal L-methionyl-[peptide] + formate. Its function is as follows. Removes the formyl group from the N-terminal Met of newly synthesized proteins. Requires at least a dipeptide for an efficient rate of reaction. N-terminal L-methionine is a prerequisite for activity but the enzyme has broad specificity at other positions. This chain is Peptide deformylase, found in Mycobacterium tuberculosis (strain ATCC 25177 / H37Ra).